The sequence spans 283 residues: 4-diphosphocytidyl-2-C-methyl-D-erythritol kinase (283 aa).

The active site involves Lys10. Residue 99 to 109 coordinates ATP; sequence PMGGGLGGGSS. Asp141 is a catalytic residue.

The protein belongs to the GHMP kinase family. IspE subfamily. In terms of assembly, homodimer.

It catalyses the reaction 4-CDP-2-C-methyl-D-erythritol + ATP = 4-CDP-2-C-methyl-D-erythritol 2-phosphate + ADP + H(+). The protein operates within isoprenoid biosynthesis; isopentenyl diphosphate biosynthesis via DXP pathway; isopentenyl diphosphate from 1-deoxy-D-xylulose 5-phosphate: step 3/6. Its function is as follows. Catalyzes the phosphorylation of the position 2 hydroxy group of 4-diphosphocytidyl-2C-methyl-D-erythritol. This chain is 4-diphosphocytidyl-2-C-methyl-D-erythritol kinase, found in Escherichia coli O9:H4 (strain HS).